We begin with the raw amino-acid sequence, 75 residues long: MKLSMAILLVMALIIFTLDKNYSSPKDLPSCEKGIHRKVTCKQCNKRSDNDDDYTKCCKSFDAFITCGFLLSKES.

An N-terminal signal peptide occupies residues 1–23 (MKLSMAILLVMALIIFTLDKNYS).

Belongs to the scoloptoxin-03 family. Post-translationally, contains 3 disulfide bonds. Expressed by the venom gland.

The protein resides in the secreted. In terms of biological role, inhibits voltage-gated potassium channels. The sequence is that of Kappa-scoloptoxin(03)-Ssm1d from Scolopendra mutilans (Chinese red-headed centipede).